Here is a 1700-residue protein sequence, read N- to C-terminus: Ras-responsive element-binding protein 1 (1700 aa).

The segment at 31 to 63 (TENGGSPQGIKSPMKPPGPNRIGRRNQETKEEK) is disordered. Residues Ser36 and Ser42 each carry the phosphoserine modification. 3 consecutive C2H2-type zinc fingers follow at residues 66–88 (YNCP…IRQH), 97–119 (HACS…MLVH), and 125–147 (YKCT…MKIH). The tract at residues 146-195 (IHEKDTNSTTAAAPPSPLKRRRLSSKRKLSHDAESEDPGPAKKMVEDGQS) is disordered. Ser161 carries the phosphoserine modification. A compositionally biased stretch (basic residues) spans 163 to 174 (LKRRRLSSKRKL). Residues Ser175 and Ser180 each carry the phosphoserine modification. Residues 184-195 (GPAKKMVEDGQS) show a composition bias toward basic and acidic residues. Residues 206 to 228 (FHCPVCFKEFVCKYELETHMETH) form a C2H2-type 4 zinc finger. Ser229 carries the post-translational modification Phosphoserine. C2H2-type zinc fingers lie at residues 233–256 (LRCD…ALVH) and 314–336 (FVCD…RQSH). Glycyl lysine isopeptide (Lys-Gly) (interchain with G-Cter in SUMO2) cross-links involve residues Lys433, Lys500, Lys549, Lys564, Lys591, and Lys611. Lys613 is covalently cross-linked (Glycyl lysine isopeptide (Lys-Gly) (interchain with G-Cter in SUMO1); alternate). Residue Lys613 forms a Glycyl lysine isopeptide (Lys-Gly) (interchain with G-Cter in SUMO2); alternate linkage. Lys622 is covalently cross-linked (Glycyl lysine isopeptide (Lys-Gly) (interchain with G-Cter in SUMO2)). 5 consecutive C2H2-type zinc fingers follow at residues 641 to 663 (YPCR…VRSH), 669 to 691 (YQCN…IRTH), 697 to 720 (YICK…RKKH), 751 to 782 (TVCR…GGCH), and 788 to 813 (FECK…QHLH). Residues Lys855, Lys883, and Lys911 each participate in a glycyl lysine isopeptide (Lys-Gly) (interchain with G-Cter in SUMO2) cross-link. Disordered stretches follow at residues 939 to 991 (IPKS…SLET) and 1092 to 1177 (ADPG…AVDL). The span at 944-961 (KKGDKDTVVPSDAKKPEP) shows a compositional bias: basic and acidic residues. Ser970 carries the phosphoserine modification. Positions 1097–1111 (SITSSNTVATDSPGS) are enriched in polar residues. Residues Ser1125, Ser1137, and Ser1138 each carry the phosphoserine modification. The span at 1137–1146 (SSPEEALPTE) shows a compositional bias: low complexity. Basic residues predominate over residues 1155–1165 (SRKRGRKRGLR). Phosphoserine occurs at positions 1172, 1179, 1180, and 1230. 4 disordered regions span residues 1195–1235 (TNKF…AEDR), 1273–1368 (HTDS…QSLD), 1383–1521 (SEAG…RKKV), and 1564–1670 (VRHQ…SPAA). A C2H2-type 12 zinc finger spans residues 1251-1273 (INCPHCPRVFPWASSLQRHMLTH). Residues 1273-1285 (HTDSQSDTDTLTT) are compositionally biased toward low complexity. The segment covering 1327–1346 (SEEEEEKETEENPEPEEECR) has biased composition (acidic residues). A C2H2-type 13 zinc finger spans residues 1400-1422 (HACDTCGKNFKFLGTLSRHKKAH). Phosphoserine is present on residues Ser1450 and Ser1452. Basic and acidic residues predominate over residues 1492-1507 (TAEKRGDGDKRPKTDS). 2 consecutive C2H2-type zinc fingers follow at residues 1520–1542 (KVCS…MRSH) and 1548–1570 (YKCQ…QRIH). Residues 1564–1580 (VRHQRIHQKARHSKHHG) show a composition bias toward basic residues. Residues Ser1593 and Ser1606 each carry the phosphoserine modification. Residues 1645–1660 (AEQAAEPSAPKEQASP) are compositionally biased toward low complexity. The residue at position 1667 (Ser1667) is a Phosphoserine.

Belongs to the krueppel C2H2-type zinc-finger protein family. In terms of assembly, interacts with NEUROD1. Interacts with AR. In terms of tissue distribution, expressed in splenic B-cells.

Its subcellular location is the nucleus speckle. In terms of biological role, transcription factor that binds specifically to the RAS-responsive elements (RRE) of gene promoters. Represses the angiotensinogen gene. Negatively regulates the transcriptional activity of AR. Potentiates the transcriptional activity of NEUROD1. Binds specifically to the allelic variant of the CDKN2A promoter present in Balb/c mice, which leads to a down-regulation of CDKN2A expression in this strain, and, as a consequence, to an elevated susceptibility to pristane-induced tumors. Promotes brown adipocyte differentiation. May be involved in Ras/Raf-mediated cell differentiation by enhancing calcitonin expression. In Mus musculus (Mouse), this protein is Ras-responsive element-binding protein 1 (Rreb1).